Reading from the N-terminus, the 217-residue chain is Adenylate kinase (217 aa).

Position 10–15 (10–15 (GAGKGT)) interacts with ATP. The NMP stretch occupies residues 30 to 59 (STGDIFRKNVADDTPLGRLAKQYMDAGDLV). AMP-binding positions include T31, R36, 57–59 (DLV), 85–88 (GFPR), and Q92. The interval 126–163 (GRRTCADCAHVWHVTYDPPTVDGVCDLCGGKLFQREDD) is LID. R127 is a binding site for ATP. Residues C130, C133, C150, and C153 each contribute to the Zn(2+) site. 2 residues coordinate AMP: R160 and R171. G199 is a binding site for ATP.

Belongs to the adenylate kinase family. As to quaternary structure, monomer.

The protein resides in the cytoplasm. It carries out the reaction AMP + ATP = 2 ADP. The protein operates within purine metabolism; AMP biosynthesis via salvage pathway; AMP from ADP: step 1/1. Its function is as follows. Catalyzes the reversible transfer of the terminal phosphate group between ATP and AMP. Plays an important role in cellular energy homeostasis and in adenine nucleotide metabolism. This is Adenylate kinase from Acidothermus cellulolyticus (strain ATCC 43068 / DSM 8971 / 11B).